Here is a 313-residue protein sequence, read N- to C-terminus: Protochlorophyllide reductase (313 aa).

It belongs to the short-chain dehydrogenases/reductases (SDR) family. POR subfamily.

The protein localises to the plastid. Its subcellular location is the chloroplast. The enzyme catalyses chlorophyllide a + NADP(+) = protochlorophyllide a + NADPH + H(+). It functions in the pathway porphyrin-containing compound metabolism; chlorophyll biosynthesis. In terms of biological role, phototransformation of protochlorophyllide (Pchlide) to chlorophyllide (Chlide). The protein is Protochlorophyllide reductase of Avena sativa (Oat).